Reading from the N-terminus, the 204-residue chain is Somatotropin (204 aa).

An N-terminal signal peptide occupies residues 1-17 (MDRVVLLLSVLSLGVSS). A Pyrrolidone carboxylic acid modification is found at Gln-18. 2 disulfide bridges follow: Cys-69–Cys-177 and Cys-194–Cys-202.

This sequence belongs to the somatotropin/prolactin family.

It is found in the secreted. In terms of biological role, growth hormone plays an important role in growth control and is involved in the regulation of several anabolic processes. Implicated as an osmoregulatory substance important for seawater adaptation. This Seriola quinqueradiata (Five-ray yellowtail) protein is Somatotropin (gh).